Reading from the N-terminus, the 108-residue chain is C-C motif chemokine 19 (108 aa).

A signal peptide spans 1–25 (MAPRVTPLLAFSLLVLWTFPAPTLG). Cystine bridges form between Cys-33/Cys-59 and Cys-34/Cys-75. A glycan (N-linked (GlcNAc...) asparagine) is linked at Asn-100.

The protein belongs to the intercrine beta (chemokine CC) family. As to quaternary structure, interacts with TNFAIP6 (via Link domain). As to expression, highly expressed by dendritic cells in mesenteric and peripheral lymph nodes. Significant expression in spleen (T cell zone or periarteriolar lymphatic sheath) and Peyer patches. Low expression in thymus.

It is found in the secreted. Strongly chemotactic for naive (L-selectinhi) CD4 T-cells and for CD8 T-cells and weakly attractive for resting B-cells and memory (L-selectinlo) CD4 T-cells. May play a role in promoting encounters between recirculating T-cells and dendritic cells and in the migration of activated B-cells into the T-zone of secondary lymphoid tissues. Binds to chemokine receptor CCR7. Binds to atypical chemokine receptor ACKR4 and mediates the recruitment of beta-arrestin (ARRB1/2) to ACKR4. The chain is C-C motif chemokine 19 (Ccl19) from Mus musculus (Mouse).